We begin with the raw amino-acid sequence, 121 residues long: Large ribosomal subunit protein uL18 (121 aa).

It belongs to the universal ribosomal protein uL18 family. In terms of assembly, part of the 50S ribosomal subunit; part of the 5S rRNA/L5/L18/L25 subcomplex. Contacts the 5S and 23S rRNAs.

Its function is as follows. This is one of the proteins that bind and probably mediate the attachment of the 5S RNA into the large ribosomal subunit, where it forms part of the central protuberance. The protein is Large ribosomal subunit protein uL18 of Paracidovorax citrulli (strain AAC00-1) (Acidovorax citrulli).